We begin with the raw amino-acid sequence, 212 residues long: Protein Nef (212 aa).

The N-myristoyl glycine; by host moiety is linked to residue G2. S6 carries the phosphoserine; by host modification. Residues 67-71 (EEEEE) are acidic; interacts with host PACS1 and PACS2; stabilizes the interaction of NEF/MHC-I with host AP1M1; necessary for MHC-I internalization. The segment at 75 to 84 (PVRPQVPLRP) is SH3-binding; interaction with Src family tyrosine kinases. The short motif at 78 to 81 (PQVP) is the PxxP; stabilizes the interaction of NEF/MHC-I with host AP1M1; necessary for MHC-I internalization element. Residues 114–130 (DILDLWMYHTQGILPDW) are mediates dimerization, Nef-PTE1 interaction. A binding to ATP6V1H region spans residues 154–186 (LSAEEVEEANEGDNNALLHPICQHGADDDHKEV). The Dileucine internalization motif; necessary for CD4 internalization motif lies at 170 to 171 (LL). A Diacidic; necessary for CD4 internalization motif is present at residues 180–181 (DD).

This sequence belongs to the lentivirus primate group Nef protein family. In terms of assembly, monomer; cytosolic form. Homodimer; membrane bound form. Interacts with Nef associated p21-activated kinase (PAK2); this interaction activates PAK2. Associates with the Nef-MHC-I-AP1 complex; this complex is required for MHC-I internalization. Interacts (via C-terminus) with host PI3-kinase. Interacts with host PACS1; this interaction seems to be weak. Interacts with host PACS2. Interacts with host LCK and MAPK3; these interactions inhibit the kinase activity of the latter. Interacts with host ATP6V1H; this interaction may play a role in CD4 endocytosis. Associates with the CD4-Nef-AP2 complex; this complex is required for CD4 internalization. Interacts with host AP2 subunit alpha and AP2 subunit sigma2. Interacts with TCR-zeta chain; this interaction up-regulates the Fas ligand (FasL) surface expression. Interacts with host HCK, LYN, and SRC; these interactions activate the Src family kinases. Interacts with MAP3K5; this interaction inhibits the Fas and TNFR-mediated death signals. Interacts with beta-COP and PTE1. Interacts with human RACK1; this increases Nef phosphorylation by PKC. Interacts with TP53; this interaction decreases the half-life of TP53, protecting the infected cell against p53-mediated apoptosis. The virion-associated Nef proteins are cleaved by the viral protease to release the soluble C-terminal core protein. Nef is probably cleaved concomitantly with viral structural proteins on maturation of virus particles. Post-translationally, myristoylated. In terms of processing, phosphorylated on serine residues, probably by host PKCdelta and theta.

The protein localises to the host cell membrane. It is found in the virion. Its subcellular location is the secreted. The protein resides in the host Golgi apparatus membrane. In terms of biological role, factor of infectivity and pathogenicity, required for optimal virus replication. Alters numerous pathways of T-lymphocyte function and down-regulates immunity surface molecules in order to evade host defense and increase viral infectivity. Alters the functionality of other immunity cells, like dendritic cells, monocytes/macrophages and NK cells. Its function is as follows. In infected CD4(+) T-lymphocytes, down-regulates the surface MHC-I, mature MHC-II, CD4, CD28, CCR5 and CXCR4 molecules. Mediates internalization and degradation of host CD4 through the interaction of with the cytoplasmic tail of CD4, the recruitment of AP-2 (clathrin adapter protein complex 2), internalization through clathrin coated pits, and subsequent transport to endosomes and lysosomes for degradation. Diverts host MHC-I molecules to the trans-Golgi network-associated endosomal compartments by an endocytic pathway to finally target them for degradation. MHC-I down-regulation may involve AP-1 (clathrin adapter protein complex 1) or possibly Src family kinase-ZAP70/Syk-PI3K cascade recruited by PACS2. In consequence infected cells are masked for immune recognition by cytotoxic T-lymphocytes. Decreasing the number of immune receptors also prevents reinfection by more HIV particles (superinfection). Down-regulates host SERINC3 and SERINC5 thereby excluding these proteins from the viral particles. Virion infectivity is drastically higher when SERINC3 or SERINC5 are excluded from the viral envelope, because these host antiviral proteins impair the membrane fusion event necessary for subsequent virion penetration. Functionally, bypasses host T-cell signaling by inducing a transcriptional program nearly identical to that of anti-CD3 cell activation. Interaction with TCR-zeta chain up-regulates the Fas ligand (FasL). Increasing surface FasL molecules and decreasing surface MHC-I molecules on infected CD4(+) cells send attacking cytotoxic CD8+ T-lymphocytes into apoptosis. Plays a role in optimizing the host cell environment for viral replication without causing cell death by apoptosis. Protects the infected cells from apoptosis in order to keep them alive until the next virus generation is ready to strike. Inhibits the Fas and TNFR-mediated death signals by blocking MAP3K5/ASK1. Decreases the half-life of TP53, protecting the infected cell against p53-mediated apoptosis. Inhibits the apoptotic signals regulated by the Bcl-2 family proteins through the formation of a Nef/PI3-kinase/PAK2 complex that leads to activation of PAK2 and induces phosphorylation of host BAD. In terms of biological role, extracellular Nef protein targets CD4(+) T-lymphocytes for apoptosis by interacting with CXCR4 surface receptors. The polypeptide is Protein Nef (Human immunodeficiency virus type 1 group N (isolate YBF30) (HIV-1)).